We begin with the raw amino-acid sequence, 189 residues long: Adenine phosphoribosyltransferase (189 aa).

It belongs to the purine/pyrimidine phosphoribosyltransferase family. In terms of assembly, homodimer.

Its subcellular location is the cytoplasm. It catalyses the reaction AMP + diphosphate = 5-phospho-alpha-D-ribose 1-diphosphate + adenine. It functions in the pathway purine metabolism; AMP biosynthesis via salvage pathway; AMP from adenine: step 1/1. Catalyzes a salvage reaction resulting in the formation of AMP, that is energically less costly than de novo synthesis. This is Adenine phosphoribosyltransferase from Frankia alni (strain DSM 45986 / CECT 9034 / ACN14a).